A 148-amino-acid chain; its full sequence is Large ribosomal subunit protein uL15 (148 aa).

The span at 1–10 shows a compositional bias: basic and acidic residues; the sequence is MQLHNLEYKK. Residues 1 to 42 form a disordered region; the sequence is MQLHNLEYKKGSRNHKEKRVGRGHGSGLGKTSGRGQDGQKAR. Positions 11–22 are enriched in basic residues; sequence GSRNHKEKRVGR. Residues 23 to 36 are compositionally biased toward gly residues; the sequence is GHGSGLGKTSGRGQ.

It belongs to the universal ribosomal protein uL15 family. Part of the 50S ribosomal subunit.

Functionally, binds to the 23S rRNA. This is Large ribosomal subunit protein uL15 from Ureaplasma parvum serovar 3 (strain ATCC 27815 / 27 / NCTC 11736).